The primary structure comprises 828 residues: MKLSRRSFMKANAVAAAAAAAGLSVPGVARAVVGQQEAIKWDKAPCRFCGTGCGVLVGTQQGRVVACQGDPDAPVNRGLNCIKGYFLPKIMYGKDRLTQPMLRMKDGSYHKDGEFTPVSWEQAFDVMEEKFKTSLKEKGPEAIGMFGSGQWTIWEGYAAAKLFKAGFRSNNIDPNARHCMASAVVGFMRTFGMDEPMGCYDDIEQADAFVLWGSNMAEMHPILWSRITNRRLSDPNVKVAVLSTFQHRSFELADNGIVFTPQSDLVILNYIANYIIQNNAVNQDFFTKHVNLRKGATDIGYGLRPTHPLEKAAKNPGSDASEPMSFDEYKAFVAEYTLDKTAEMTGVPKDQLEQLAQLYADPNKRVISYWTMGFNQHTRGVWANNLVYNLHLLTGKISQPGCGPFSLTGQPSACGTAREVGTFSHRLPADMVVTNEKHRDICEKHWQIPAGTIPAKVGLHAVAQDRALKDGKLNVYWVMCNNNMQAGPNINEDRMPGWRDPRNFIIVSDPYPTVSALSADLILPTAMWVEKEGAYGNAERRTQFWRQQIKAPGEAKSDLWQLVQFSRRFKTEEVWPEALLAQKPELRGKTLYDVLFATPAVSKFPLSELKEDQLNDESRELGFYLQKGLFEEYAWFGRGHGHDLAPFDDYHNARGLRWPVVEGKETQWRYSEGNDPYVKAGEGYKFYGKPDGKAVIFALPFEPAAESPDNEYDLWLSTGRVLEHWHTGSMTRRVPELHRAFPEAVVFIHPLDAKARDLRRGDKVKVSSRRGEVISIVETRGRNRPPQGLVYMPFFDAAQLVNNLTLDATDPLSKETDFKKCAVKLAKV.

Positions methionine 1–alanine 31 form a signal peptide, tat-type signal. In terms of domain architecture, 4Fe-4S Mo/W bis-MGD-type spans isoleucine 39–aspartate 95. Positions 46, 49, 53, and 81 each coordinate [4Fe-4S] cluster. Mo-bis(molybdopterin guanine dinucleotide) contacts are provided by residues lysine 83, glutamine 150, asparagine 175, cysteine 179, tryptophan 212–methionine 219, serine 243–histidine 247, glutamine 262–aspartate 264, methionine 372, glutamine 376, asparagine 482, serine 508–aspartate 509, lysine 531, aspartate 558, and threonine 718–threonine 727. A substrate-binding site is contributed by phenylalanine 794. Mo-bis(molybdopterin guanine dinucleotide)-binding residues include asparagine 802 and lysine 819.

It belongs to the prokaryotic molybdopterin-containing oxidoreductase family. NasA/NapA/NarB subfamily. In terms of assembly, component of the periplasmic nitrate reductase NapAB complex composed of NapA and NapB. [4Fe-4S] cluster serves as cofactor. The cofactor is Mo-bis(molybdopterin guanine dinucleotide). In terms of processing, predicted to be exported by the Tat system. The position of the signal peptide cleavage has not been experimentally proven.

It localises to the periplasm. It carries out the reaction 2 Fe(II)-[cytochrome] + nitrate + 2 H(+) = 2 Fe(III)-[cytochrome] + nitrite + H2O. Functionally, catalytic subunit of the periplasmic nitrate reductase complex NapAB. Receives electrons from NapB and catalyzes the reduction of nitrate to nitrite. This Salmonella agona (strain SL483) protein is Periplasmic nitrate reductase.